The following is a 246-amino-acid chain: Ribonuclease 3 (246 aa).

Positions 16 to 146 constitute an RNase III domain; the sequence is ATELEAGIGY…LLAAVYLDGG (131 aa). A Mg(2+)-binding site is contributed by Glu-59. Asp-63 is a catalytic residue. Mg(2+)-binding residues include Asn-132 and Glu-135. Glu-135 is a catalytic residue. One can recognise a DRBM domain in the interval 173–242; it reads DFKTEFQEMV…ARQVLARFAA (70 aa).

Belongs to the ribonuclease III family. In terms of assembly, homodimer. Mg(2+) serves as cofactor.

Its subcellular location is the cytoplasm. It carries out the reaction Endonucleolytic cleavage to 5'-phosphomonoester.. Functionally, digests double-stranded RNA. Involved in the processing of primary rRNA transcript to yield the immediate precursors to the large and small rRNAs (23S and 16S). Processes some mRNAs, and tRNAs when they are encoded in the rRNA operon. Processes pre-crRNA and tracrRNA of type II CRISPR loci if present in the organism. This chain is Ribonuclease 3, found in Geobacter metallireducens (strain ATCC 53774 / DSM 7210 / GS-15).